We begin with the raw amino-acid sequence, 239 residues long: Type II restriction enzyme Eco47II (239 aa).

The enzyme catalyses Endonucleolytic cleavage of DNA to give specific double-stranded fragments with terminal 5'-phosphates.. Its function is as follows. A P subtype restriction enzyme that recognizes the double-stranded sequence 5'-GGNCC-3'; the cleavage site is unknown. The sequence is that of Type II restriction enzyme Eco47II from Escherichia coli.